The primary structure comprises 637 residues: 1-deoxy-D-xylulose-5-phosphate synthase (637 aa).

Thiamine diphosphate is bound by residues histidine 71 and 112–114; that span reads SHA. A Mg(2+)-binding site is contributed by aspartate 144. Thiamine diphosphate is bound by residues 145 to 146, asparagine 173, tyrosine 284, and glutamate 365; that span reads GA. Asparagine 173 is a Mg(2+) binding site.

Belongs to the transketolase family. DXPS subfamily. In terms of assembly, homodimer. Requires Mg(2+) as cofactor. The cofactor is thiamine diphosphate.

It carries out the reaction D-glyceraldehyde 3-phosphate + pyruvate + H(+) = 1-deoxy-D-xylulose 5-phosphate + CO2. Its pathway is metabolic intermediate biosynthesis; 1-deoxy-D-xylulose 5-phosphate biosynthesis; 1-deoxy-D-xylulose 5-phosphate from D-glyceraldehyde 3-phosphate and pyruvate: step 1/1. Functionally, catalyzes the acyloin condensation reaction between C atoms 2 and 3 of pyruvate and glyceraldehyde 3-phosphate to yield 1-deoxy-D-xylulose-5-phosphate (DXP). This is 1-deoxy-D-xylulose-5-phosphate synthase from Mycolicibacterium vanbaalenii (strain DSM 7251 / JCM 13017 / BCRC 16820 / KCTC 9966 / NRRL B-24157 / PYR-1) (Mycobacterium vanbaalenii).